Reading from the N-terminus, the 509-residue chain is Pentatricopeptide repeat-containing protein At2g13420, mitochondrial (509 aa).

A mitochondrion-targeting transit peptide spans 1 to 19; sequence MLLLKQISPPFHLHQLRRR. 8 PPR repeats span residues 172–202, 206–240, 241–285, 286–320, 321–355, 356–390, 391–425, and 426–460; these read RLVEFGFLLDTLCKYGYTKMAVGVFNERKEE, DEKVYTILIAGWCKLRRIDMAEKFLVEMIESGIEP, NVVT…GIEP, DVTSFSIVLHMYSRAHKAELTLDKMKLMKAKGISP, TIETYTSVVKCLCSCGRLEEAEELLETMVESGISP, SSATYNCFFKEYKGRKDANGAMNLYRKMKNGLCKP, STQTYNVLLGTFINLGKMETVKEIWDDLKASETGP, and DLDSYTSLVHGLCSKEKWKEACGYFVEMIERGFLP.

It belongs to the PPR family. P subfamily.

The protein localises to the mitochondrion. This is Pentatricopeptide repeat-containing protein At2g13420, mitochondrial from Arabidopsis thaliana (Mouse-ear cress).